A 240-amino-acid polypeptide reads, in one-letter code: Probable transcriptional regulatory protein YrbC (240 aa).

Belongs to the TACO1 family.

The protein localises to the cytoplasm. The polypeptide is Probable transcriptional regulatory protein YrbC (yrbC) (Bacillus subtilis (strain 168)).